The chain runs to 150 residues: Large ribosomal subunit protein bL9 (150 aa).

Belongs to the bacterial ribosomal protein bL9 family.

Binds to the 23S rRNA. The protein is Large ribosomal subunit protein bL9 of Neisseria gonorrhoeae (strain ATCC 700825 / FA 1090).